Reading from the N-terminus, the 298-residue chain is Tyrosine recombinase XerC (298 aa).

Residues 2–88 (TDLHTDVERY…ALRSFFDWLV (87 aa)) enclose the Core-binding (CB) domain. The Tyr recombinase domain maps to 109-288 (HLPKNIDVDD…DFQHLASVYD (180 aa)). Active-site residues include R148, K172, H240, R243, and H266. Catalysis depends on Y275, which acts as the O-(3'-phospho-DNA)-tyrosine intermediate.

Belongs to the 'phage' integrase family. XerC subfamily. Forms a cyclic heterotetrameric complex composed of two molecules of XerC and two molecules of XerD, in which XerC interacts with XerD via its C-terminal region, XerD interacts with XerC via its C-terminal region and so on.

Its subcellular location is the cytoplasm. Its activity is regulated as follows. FtsK may regulate the catalytic switch between XerC and XerD in the heterotetrameric complex during the two steps of the recombination process. Its function is as follows. Site-specific tyrosine recombinase, which acts by catalyzing the cutting and rejoining of the recombining DNA molecules. Binds cooperatively to specific DNA consensus sequences that are separated from XerD binding sites by a short central region, forming the heterotetrameric XerC-XerD complex that recombines DNA substrates. The complex is essential to convert dimers of the bacterial chromosome into monomers to permit their segregation at cell division. It also contributes to the segregational stability of plasmids. In the complex XerC specifically exchanges the top DNA strands. The polypeptide is Tyrosine recombinase XerC (Escherichia coli O127:H6 (strain E2348/69 / EPEC)).